Reading from the N-terminus, the 88-residue chain is Putative membrane protein insertion efficiency factor (88 aa).

The interval 68-88 is disordered; that stretch reads VPPPNSDTRARGEADARSHRL. The segment covering 75–88 has biased composition (basic and acidic residues); the sequence is TRARGEADARSHRL.

Belongs to the UPF0161 family.

It is found in the cell inner membrane. In terms of biological role, could be involved in insertion of integral membrane proteins into the membrane. The polypeptide is Putative membrane protein insertion efficiency factor (Burkholderia ambifaria (strain MC40-6)).